The chain runs to 923 residues: Mitochondrial 10-formyltetrahydrofolate dehydrogenase (923 aa).

Residues 1–19 (MLWRGSQALRHFSTSRVYF) constitute a mitochondrion; not cleaved transit peptide. The tract at residues 23 to 331 (LKLALIGQSL…PASQYFSAGE (309 aa)) is hydrolase domain. S31 is modified (phosphoserine). K60 is subject to N6-succinyllysine. Residue 110-112 (QFI) participates in (6R)-10-formyltetrahydrofolate binding. Residue H128 is the Proton donor of the active site. D164 contacts (6R)-10-formyltetrahydrofolate. The 78-residue stretch at 339-416 (AEELKVAETI…DFIQKVVRRL (78 aa)) folds into the Carrier domain. S375 carries the post-translational modification O-(pantetheine 4'-phosphoryl)serine. The aldehyde dehydrogenase domain stretch occupies residues 438–923 (TVKIPYQCFI…LKIKTVTLEY (486 aa)). NADP(+) contacts are provided by residues 592-594 (IPW) and 618-621 (KPAQ). At S650 the chain carries Phosphoserine. NADP(+) contacts are provided by residues 651–656 (GGVAGQ) and 671–672 (GS). An N6-succinyllysine modification is found at K681. The active-site Proton acceptor is E694. Position 694-695 (694-695 (EL)) interacts with NADP(+). The active-site Proton donor is the C728. NADP(+) is bound by residues K778 and 825–827 (ESF). Residue K903 is modified to N6-acetyllysine.

This sequence in the N-terminal section; belongs to the GART family. In the C-terminal section; belongs to the aldehyde dehydrogenase family. ALDH1L subfamily. In terms of processing, phosphopantetheinylation at Ser-375 by AASDHPPT is required for the formyltetrahydrofolate dehydrogenase activity.

Its subcellular location is the mitochondrion. The catalysed reaction is (6R)-10-formyltetrahydrofolate + NADP(+) + H2O = (6S)-5,6,7,8-tetrahydrofolate + CO2 + NADPH + H(+). Its function is as follows. Mitochondrial 10-formyltetrahydrofolate dehydrogenase that catalyzes the NADP(+)-dependent conversion of 10-formyltetrahydrofolate to tetrahydrofolate and carbon dioxide. The protein is Mitochondrial 10-formyltetrahydrofolate dehydrogenase of Mus musculus (Mouse).